Here is a 131-residue protein sequence, read N- to C-terminus: Keratin, high-sulfur matrix protein, IIIA3 (131 aa).

Wool.

Its function is as follows. The keratin products of mammalian epidermal derivatives such as wool and hair consist of microfibrils embedded in a rigid matrix of other proteins. The matrix proteins include the high-sulfur and high-tyrosine keratins, having molecular weights of 6-20 kDa, whereas the microfibrils contain the larger, low-sulfur keratins (40-56 kDa). The polypeptide is Keratin, high-sulfur matrix protein, IIIA3 (Ovis aries (Sheep)).